We begin with the raw amino-acid sequence, 500 residues long: 4-alpha-glucanotransferase (500 aa).

The protein belongs to the disproportionating enzyme family.

It is found in the cytoplasm. It catalyses the reaction Transfers a segment of a (1-&gt;4)-alpha-D-glucan to a new position in an acceptor, which may be glucose or a (1-&gt;4)-alpha-D-glucan.. In Thermus thermophilus, this protein is 4-alpha-glucanotransferase (malQ).